Reading from the N-terminus, the 413-residue chain is Tyrosine--tRNA ligase (413 aa).

Positions 55-64 (PTRPDLHLGH) match the 'HIGH' region motif. The short motif at 242–246 (KMSKS) is the 'KMSKS' region element. Lys-245 provides a ligand contact to ATP. Positions 346–410 (VKLSYILREC…GKKAFRRLVK (65 aa)) constitute an S4 RNA-binding domain.

The protein belongs to the class-I aminoacyl-tRNA synthetase family. TyrS type 2 subfamily. As to quaternary structure, homodimer.

Its subcellular location is the cytoplasm. The enzyme catalyses tRNA(Tyr) + L-tyrosine + ATP = L-tyrosyl-tRNA(Tyr) + AMP + diphosphate + H(+). Its function is as follows. Catalyzes the attachment of tyrosine to tRNA(Tyr) in a two-step reaction: tyrosine is first activated by ATP to form Tyr-AMP and then transferred to the acceptor end of tRNA(Tyr). This is Tyrosine--tRNA ligase from Synechococcus sp. (strain JA-2-3B'a(2-13)) (Cyanobacteria bacterium Yellowstone B-Prime).